The primary structure comprises 274 residues: MSRPILVFDSGIGGLSVLAEIRKSLPHSDYCYLFDNARLPYGELEEQVLIAGCVALVCDLVARTNAMIVVVACNTASTVVLPALRANLSIPVVGVVPAIKPAAQMSKSKRIGLLATPGTVKRHYTHELISQFADDCHVELFGCSELVMMAEQKIATGQMDMHRLADLLAPVVAAQLDVLVLGCTHFPMIQAELQQVLGAGVTLMDSGAAIAKRVVTLLTQQNLIVEERRVTNERETLGESAMQAFYTKAEISEGLTTTLIDCGFSTIERITTTN.

Residues aspartate 9–serine 10 and tyrosine 41–glycine 42 contribute to the substrate site. Cysteine 73 (proton donor/acceptor) is an active-site residue. Asparagine 74–threonine 75 is a binding site for substrate. Cysteine 183 acts as the Proton donor/acceptor in catalysis. Threonine 184–histidine 185 is a binding site for substrate.

This sequence belongs to the aspartate/glutamate racemases family.

The catalysed reaction is L-glutamate = D-glutamate. It participates in cell wall biogenesis; peptidoglycan biosynthesis. In terms of biological role, provides the (R)-glutamate required for cell wall biosynthesis. The chain is Glutamate racemase from Shewanella baltica (strain OS155 / ATCC BAA-1091).